Consider the following 268-residue polypeptide: Tryptophan synthase alpha chain (268 aa).

Residues E49 and D60 each act as proton acceptor in the active site.

Belongs to the TrpA family. In terms of assembly, tetramer of two alpha and two beta chains.

The catalysed reaction is (1S,2R)-1-C-(indol-3-yl)glycerol 3-phosphate + L-serine = D-glyceraldehyde 3-phosphate + L-tryptophan + H2O. It participates in amino-acid biosynthesis; L-tryptophan biosynthesis; L-tryptophan from chorismate: step 5/5. In terms of biological role, the alpha subunit is responsible for the aldol cleavage of indoleglycerol phosphate to indole and glyceraldehyde 3-phosphate. This chain is Tryptophan synthase alpha chain, found in Haemophilus influenzae (strain ATCC 51907 / DSM 11121 / KW20 / Rd).